We begin with the raw amino-acid sequence, 315 residues long: Secreted mono- and diacylglycerol lipase LIP2 (315 aa).

An N-terminal signal peptide occupies residues 1–21; the sequence is MACFRVILYLSVIFFVQCVFA. Cysteine 68 and cysteine 308 form a disulfide bridge. Residue asparagine 74 is glycosylated (N-linked (GlcNAc...) asparagine). Serine 182 functions as the Nucleophile in the catalytic mechanism. Aspartate 240 is a catalytic residue. N-linked (GlcNAc...) asparagine glycosylation occurs at asparagine 265. Histidine 292 is an active-site residue.

The protein belongs to the AB hydrolase superfamily. Lipase family. Class 3 subfamily.

Its subcellular location is the secreted. It catalyses the reaction a monoacylglycerol + H2O = glycerol + a fatty acid + H(+). The catalysed reaction is a diacylglycerol + H2O = a monoacylglycerol + a fatty acid + H(+). In terms of biological role, secreted lipase involved in Dandruff and seborrheic dermatitis (D/SD) probably via lipase-mediated breakdown of sebaceous lipids and release of irritating free fatty acids. Shows activity against monoglyceride and diglyceride substrates and generates free oleic acid from the substrates mono- and diolein. Able to cleave the oleic acid from both the 1 and the 2 position of the glycerol backbone as 1,2 isomers of diolein were converted into oleic acid and glycerol. Due to an absence of fatty acid synthase genes in Malassezia species, secretory lipases are essential for the yeast to generate free fatty acids from degradation of sebum and assimilate them as lipid sources for growth. Plays an essential role at the pathogen-host interface during disease progression. Also performs the reverse reaction to build diacylglycerols from monoacylglycerols. In Malassezia restricta (Seborrheic dermatitis infection agent), this protein is Secreted mono- and diacylglycerol lipase LIP2.